A 239-amino-acid polypeptide reads, in one-letter code: Pimeloyl-[acyl-carrier protein] methyl ester esterase (239 aa).

Substrate contacts are provided by residues Trp20, Ser77–Met78, and Phe138–Gln142. Ser77 functions as the Nucleophile in the catalytic mechanism. Residues Asp192 and His220 contribute to the active site. His220 lines the substrate pocket.

The protein belongs to the AB hydrolase superfamily. Carboxylesterase BioH family. As to quaternary structure, monomer.

The protein localises to the cytoplasm. It catalyses the reaction 6-carboxyhexanoyl-[ACP] methyl ester + H2O = 6-carboxyhexanoyl-[ACP] + methanol + H(+). It functions in the pathway cofactor biosynthesis; biotin biosynthesis. Its function is as follows. The physiological role of BioH is to remove the methyl group introduced by BioC when the pimeloyl moiety is complete. It allows to synthesize pimeloyl-ACP via the fatty acid synthetic pathway through the hydrolysis of the ester bonds of pimeloyl-ACP esters. The protein is Pimeloyl-[acyl-carrier protein] methyl ester esterase of Legionella pneumophila (strain Corby).